The sequence spans 38 residues: Photosystem II reaction center protein L (38 aa).

Residues 17–37 (SLYWGLLLIFVLAVLFSNYFF) traverse the membrane as a helical segment.

It belongs to the PsbL family. In terms of assembly, PSII is composed of 1 copy each of membrane proteins PsbA, PsbB, PsbC, PsbD, PsbE, PsbF, PsbH, PsbI, PsbJ, PsbK, PsbL, PsbM, PsbT, PsbX, PsbY, PsbZ, Psb30/Ycf12, at least 3 peripheral proteins of the oxygen-evolving complex and a large number of cofactors. It forms dimeric complexes.

It is found in the plastid. It localises to the chloroplast thylakoid membrane. One of the components of the core complex of photosystem II (PSII). PSII is a light-driven water:plastoquinone oxidoreductase that uses light energy to abstract electrons from H(2)O, generating O(2) and a proton gradient subsequently used for ATP formation. It consists of a core antenna complex that captures photons, and an electron transfer chain that converts photonic excitation into a charge separation. This subunit is found at the monomer-monomer interface and is required for correct PSII assembly and/or dimerization. The sequence is that of Photosystem II reaction center protein L from Gnetum gnemon (Spanish joint-fir).